The following is an 819-amino-acid chain: DNA topoisomerase 4 subunit A (819 aa).

A Topo IIA-type catalytic domain is found at 30 to 496; the sequence is LPDIRDGLKP…QIIEIDTASL (467 aa). Tyrosine 118 serves as the catalytic O-(5'-phospho-DNA)-tyrosine intermediate.

It belongs to the type II topoisomerase GyrA/ParC subunit family. ParC type 2 subfamily. As to quaternary structure, heterotetramer composed of ParC and ParE.

It localises to the cell membrane. The catalysed reaction is ATP-dependent breakage, passage and rejoining of double-stranded DNA.. Functionally, topoisomerase IV is essential for chromosome segregation. It relaxes supercoiled DNA. Performs the decatenation events required during the replication of a circular DNA molecule. The polypeptide is DNA topoisomerase 4 subunit A (Streptococcus pyogenes serotype M6 (strain ATCC BAA-946 / MGAS10394)).